The following is a 582-amino-acid chain: Guanine nucleotide-binding protein-like NSN1 (582 aa).

Residues 1–46 (MVKRSKKSKSKRVTLKQKHKVLKKVKEHHKKKAKDAKKLGLHRKPR) are compositionally biased toward basic residues. The tract at residues 1–58 (MVKRSKKSKSKRVTLKQKHKVLKKVKEHHKKKAKDAKKLGLHRKPRVEKDPGIPNDWP) is disordered. The interval 2–49 (VKRSKKSKSKRVTLKQKHKVLKKVKEHHKKKAKDAKKLGLHRKPRVEK) is basic. 3 consecutive short sequence motifs (nuclear localization signal) follow at residues 5–12 (SKKSKSKR), 22–29 (LKKVKEHH), and 69–76 (VRRARALE). Residues 15-94 (LKQKHKVLKK…RKERAKKRKL (80 aa)) are a coiled coil. In terms of domain architecture, CP-type G spans 127–311 (YKELVKVIEL…LLDCPGVVML (185 aa)). The DARXP motif motif lies at 145-149 (DARDP). The tract at residues 175-178 (NKID) is G4. 175 to 178 (NKID) contacts GTP. A G5 region spans residues 202-204 (KCS). A G1 region spans residues 260 to 267 (GLPNVGKS). GTP is bound at residue 263–268 (NVGKSS). Residues 281–456 (VGATPGLTRS…NEFNPVIIPS (176 aa)) are intermediate. Residues 286–290 (GLTRS) form a G2 region. GTP is bound by residues 304–307 (DCPG) and G307. The segment at 304–307 (DCPG) is G3. The segment at 463–551 (DETMIEDESK…EEDLMDGDYD (89 aa)) is acidic. A disordered region spans residues 469 to 545 (DESKTQTEEE…KKAGADEEDL (77 aa)). A compositionally biased stretch (acidic residues) spans 476–496 (EEEAEHESDDDESMGGEEEEE). The span at 497–506 (AGKTKEKSET) shows a compositional bias: basic and acidic residues. Positions 515-537 (AAESMLNTKKQKAEKKKRKKAKK) form a coiled coil. Positions 522–529 (TKKQKAEK) match the Nuclear localization signal 4 motif. Residues 523–537 (KKQKAEKKKRKKAKK) show a composition bias toward basic residues.

It belongs to the TRAFAC class YlqF/YawG GTPase family. Interacts with EBP2 and PES. In terms of tissue distribution, mostly expressed in flowers, siliques and inflorescence apex, and, to a lower extent, in stems and leaves.

It is found in the nucleus. It localises to the nucleolus. Functionally, involved in the differentiation of epidermal cells, probably via the regulation of the expression of meristem-related genes (e.g. CLV3, STM, KNAT1, CUC2 and AG) and of leaf polarity-related genes (e.g. YAB5, FIL, AS2, PHB and PHV). May play a role in regulating cellular proliferation. Necessary for flower development, probably by preventing apical dominance through the down-regulation of AG expression. Required for embryogenesis, leaf and cotyledon development, as well as for leaf polarity establishment. Plays an important role in plant growth and senescence by modulating ribosome biogenesis in nucleolus. Possesses GTPAse activity in vitro. Possesses RNA binding activity in vitro. Associates with ribosomes. In Arabidopsis thaliana (Mouse-ear cress), this protein is Guanine nucleotide-binding protein-like NSN1.